The primary structure comprises 419 residues: Variant surface glycoprotein YnAT 1.1 (419 aa).

Residues 1 to 28 (MKRVLSNVLKAWIFTIVAFHNFSTSVTA) form the signal peptide. Residues Asn-82 and Asn-358 are each glycosylated (N-linked (GlcNAc...) asparagine). A disordered region spans residues 369–405 (ESSRPPSTDANTSQKGPLQRPEKSGESSHLPSGSSHG). Positions 372–384 (RPPSTDANTSQKG) are enriched in polar residues. Asn-379 carries an N-linked (GlcNAc...) (high mannose) asparagine glycan. A compositionally biased stretch (low complexity) spans 395–405 (SSHLPSGSSHG). Ser-400 is lipidated: GPI-anchor amidated serine. Residues 401-419 (GSSHGTKAIRSILHVALLM) constitute a propeptide, removed in mature form.

The protein localises to the cell membrane. Functionally, VSG forms a coat on the surface of the parasite. The trypanosome evades the immune response of the host by expressing a series of antigenically distinct VSGs from an estimated 1000 VSG genes. The sequence is that of Variant surface glycoprotein YnAT 1.1 from Trypanosoma congolense.